Consider the following 1348-residue polypeptide: Phosphoribosylformylglycinamidine synthase (1348 aa).

ATP contacts are provided by residues 300–311 (GAATGAGGEIRD) and Ala701. Mg(2+) contacts are provided by Asp702, Glu741, Asn745, and Asp941. Ser943 is a binding site for ATP. Residues 1099–1348 (VAILREQGVN…MFRNARVWCG (250 aa)) enclose the Glutamine amidotransferase type-1 domain. The active-site Nucleophile is Cys1192. Residues His1313 and Glu1315 contribute to the active site.

This sequence in the N-terminal section; belongs to the FGAMS family. Monomer.

Its subcellular location is the cytoplasm. The catalysed reaction is N(2)-formyl-N(1)-(5-phospho-beta-D-ribosyl)glycinamide + L-glutamine + ATP + H2O = 2-formamido-N(1)-(5-O-phospho-beta-D-ribosyl)acetamidine + L-glutamate + ADP + phosphate + H(+). It functions in the pathway purine metabolism; IMP biosynthesis via de novo pathway; 5-amino-1-(5-phospho-D-ribosyl)imidazole from N(2)-formyl-N(1)-(5-phospho-D-ribosyl)glycinamide: step 1/2. Its function is as follows. Phosphoribosylformylglycinamidine synthase involved in the purines biosynthetic pathway. Catalyzes the ATP-dependent conversion of formylglycinamide ribonucleotide (FGAR) and glutamine to yield formylglycinamidine ribonucleotide (FGAM) and glutamate. The polypeptide is Phosphoribosylformylglycinamidine synthase (Xanthomonas axonopodis pv. citri (strain 306)).